A 401-amino-acid polypeptide reads, in one-letter code: 4-hydroxy-3-methylbut-2-enyl diphosphate reductase (401 aa).

Cysteine 66 contributes to the [4Fe-4S] cluster binding site. Histidine 96 is a (2E)-4-hydroxy-3-methylbut-2-enyl diphosphate binding site. Histidine 96 lines the dimethylallyl diphosphate pocket. Position 96 (histidine 96) interacts with isopentenyl diphosphate. Cysteine 157 contacts [4Fe-4S] cluster. (2E)-4-hydroxy-3-methylbut-2-enyl diphosphate is bound at residue histidine 185. Histidine 185 serves as a coordination point for dimethylallyl diphosphate. Histidine 185 is a binding site for isopentenyl diphosphate. Catalysis depends on glutamate 187, which acts as the Proton donor. Residue threonine 250 coordinates (2E)-4-hydroxy-3-methylbut-2-enyl diphosphate. Cysteine 288 is a binding site for [4Fe-4S] cluster. (2E)-4-hydroxy-3-methylbut-2-enyl diphosphate is bound by residues serine 317, serine 318, asparagine 319, and serine 379. Dimethylallyl diphosphate is bound by residues serine 317, serine 318, asparagine 319, and serine 379. Residues serine 317, serine 318, asparagine 319, and serine 379 each contribute to the isopentenyl diphosphate site.

This sequence belongs to the IspH family. Requires [4Fe-4S] cluster as cofactor.

It carries out the reaction isopentenyl diphosphate + 2 oxidized [2Fe-2S]-[ferredoxin] + H2O = (2E)-4-hydroxy-3-methylbut-2-enyl diphosphate + 2 reduced [2Fe-2S]-[ferredoxin] + 2 H(+). It catalyses the reaction dimethylallyl diphosphate + 2 oxidized [2Fe-2S]-[ferredoxin] + H2O = (2E)-4-hydroxy-3-methylbut-2-enyl diphosphate + 2 reduced [2Fe-2S]-[ferredoxin] + 2 H(+). The protein operates within isoprenoid biosynthesis; dimethylallyl diphosphate biosynthesis; dimethylallyl diphosphate from (2E)-4-hydroxy-3-methylbutenyl diphosphate: step 1/1. It participates in isoprenoid biosynthesis; isopentenyl diphosphate biosynthesis via DXP pathway; isopentenyl diphosphate from 1-deoxy-D-xylulose 5-phosphate: step 6/6. Its function is as follows. Catalyzes the conversion of 1-hydroxy-2-methyl-2-(E)-butenyl 4-diphosphate (HMBPP) into a mixture of isopentenyl diphosphate (IPP) and dimethylallyl diphosphate (DMAPP). Acts in the terminal step of the DOXP/MEP pathway for isoprenoid precursor biosynthesis. The polypeptide is 4-hydroxy-3-methylbut-2-enyl diphosphate reductase (Trichodesmium erythraeum (strain IMS101)).